We begin with the raw amino-acid sequence, 83 residues long: MGNMGIWQLLIIAVIVILLFGTKKLRSLGGDLGGAVKGFKNAMSSEEEKKALEETASEKATPSVEKTAPNAEKKTETKDKEQV.

A helical transmembrane segment spans residues M1 to G21. 2 stretches are compositionally biased toward basic and acidic residues: residues E47–S57 and A71–V83. Positions E47–V83 are disordered.

Belongs to the TatA/E family. In terms of assembly, the Tat system comprises two distinct complexes: a TatABC complex, containing multiple copies of TatA, TatB and TatC subunits, and a separate TatA complex, containing only TatA subunits. Substrates initially bind to the TatABC complex, which probably triggers association of the separate TatA complex to form the active translocon.

It is found in the cell inner membrane. In terms of biological role, part of the twin-arginine translocation (Tat) system that transports large folded proteins containing a characteristic twin-arginine motif in their signal peptide across membranes. TatA could form the protein-conducting channel of the Tat system. In Shewanella woodyi (strain ATCC 51908 / MS32), this protein is Sec-independent protein translocase protein TatA.